The chain runs to 348 residues: Anthranilate phosphoribosyltransferase (348 aa).

5-phospho-alpha-D-ribose 1-diphosphate is bound by residues Gly-91, 94–95 (GD), Thr-99, 101–104 (NIST), 119–127 (KHGNRSASG), and Ser-131. Gly-91 serves as a coordination point for anthranilate. Position 103 (Ser-103) interacts with Mg(2+). An anthranilate-binding site is contributed by Asn-122. Arg-177 contacts anthranilate. Residues Asp-236 and Glu-237 each coordinate Mg(2+).

This sequence belongs to the anthranilate phosphoribosyltransferase family. As to quaternary structure, homodimer. It depends on Mg(2+) as a cofactor.

The catalysed reaction is N-(5-phospho-beta-D-ribosyl)anthranilate + diphosphate = 5-phospho-alpha-D-ribose 1-diphosphate + anthranilate. The protein operates within amino-acid biosynthesis; L-tryptophan biosynthesis; L-tryptophan from chorismate: step 2/5. Its function is as follows. Catalyzes the transfer of the phosphoribosyl group of 5-phosphorylribose-1-pyrophosphate (PRPP) to anthranilate to yield N-(5'-phosphoribosyl)-anthranilate (PRA). The protein is Anthranilate phosphoribosyltransferase of Synechococcus sp. (strain ATCC 27144 / PCC 6301 / SAUG 1402/1) (Anacystis nidulans).